Reading from the N-terminus, the 263-residue chain is L-erythrulose-1-phosphate isomerase (263 aa).

H106 functions as the Electrophile in the catalytic mechanism. The active-site Proton acceptor is the E178.

It belongs to the triosephosphate isomerase family.

It catalyses the reaction L-erythrulose 1-phosphate = D-erythrulose 4-phosphate. It participates in carbohydrate metabolism; L-threitol degradation. Catalyzes the isomerization of L-erythrulose-1P to D-erythrulose-4P. Involved in the degradation pathway of L-threitol, that allows M.smegmatis to grow on this compound as the sole carbon source. In Mycolicibacterium smegmatis (strain ATCC 700084 / mc(2)155) (Mycobacterium smegmatis), this protein is L-erythrulose-1-phosphate isomerase.